A 282-amino-acid polypeptide reads, in one-letter code: MIEQRPVSNLIGHLILILGIIIVAFPIYYTFVASSMTSTQIIRPPISLLPGDHLVENYREAIFGGVERVVGVSLERLLWNSFVVAMAIAVGKIIISFMSAFAIVFFRFPMRMFFFWMIFITLMLPVEVRILPTYKVIVDLGMIDTYAGLTLPLMASATATFLFRQFFLTIPGELVEAARIDNAGPFRFMRDILLPLSKTNIAALFVILFIYGWTQYLWPLLVTNDAKMNTIIIGLRRMVDWADASTPWNYVMVTAILAIIPLILVVVLMQRWFVKGLVETEK.

Transmembrane regions (helical) follow at residues 14 to 34, 86 to 106, 112 to 132, 146 to 168, 201 to 221, and 248 to 268; these read LILILGIIIVAFPIYYTFVAS, MAIAVGKIIISFMSAFAIVFF, MFFFWMIFITLMLPVEVRILP, YAGLTLPLMASATATFLFRQFFL, IAALFVILFIYGWTQYLWPLL, and WNYVMVTAILAIIPLILVVVL. Residues 78–269 enclose the ABC transmembrane type-1 domain; that stretch reads LWNSFVVAMA…IPLILVVVLM (192 aa).

Belongs to the binding-protein-dependent transport system permease family. As to quaternary structure, the complex is composed of two ATP-binding proteins (UgpC), two transmembrane proteins (UgpA and UgpE) and a solute-binding protein (UgpB).

It localises to the cell inner membrane. Its function is as follows. Part of the ABC transporter complex UgpBAEC involved in sn-glycerol-3-phosphate (G3P) import. Probably responsible for the translocation of the substrate across the membrane. This Brucella abortus (strain 2308) protein is sn-glycerol-3-phosphate transport system permease protein UgpE (ugpE).